Reading from the N-terminus, the 381-residue chain is E3 ubiquitin-protein ligase ATL15 (381 aa).

An N-terminal signal peptide occupies residues 1-23; sequence MVVMSRVSFYSSFLLLLLEVVVA. A helical membrane pass occupies residues 40–60; it reads AIIMIVLVSVFFALGCISVYM. The segment at 118 to 160 adopts an RING-type; atypical zinc-finger fold; it reads CPVCLNEFEDDETLRLIPQCCHVFHPGCIDAWLRSQTTCPLCR.

This sequence belongs to the RING-type zinc finger family. ATL subfamily.

The protein localises to the membrane. It catalyses the reaction S-ubiquitinyl-[E2 ubiquitin-conjugating enzyme]-L-cysteine + [acceptor protein]-L-lysine = [E2 ubiquitin-conjugating enzyme]-L-cysteine + N(6)-ubiquitinyl-[acceptor protein]-L-lysine.. It functions in the pathway protein modification; protein ubiquitination. Its function is as follows. E3 ubiquitin-protein ligase able to catalyze polyubiquitination with ubiquitin-conjugating enzyme E2 UBC8, UBC10, UBC11, UBC28 and UBC29 in vitro. The polypeptide is E3 ubiquitin-protein ligase ATL15 (ATL15) (Arabidopsis thaliana (Mouse-ear cress)).